The sequence spans 260 residues: Nuclear receptor subfamily 0 group B member 2 (260 aa).

Residues 16 to 260 enclose the NR LBD domain; the sequence is SHPTILYTLL…ELLEDMLLLR (245 aa). Arg-57 bears the Symmetric dimethylarginine; by PRMT5 mark.

The protein belongs to the nuclear hormone receptor family. NR0 subfamily. As to quaternary structure, heterodimer; efficient DNA binding requires dimerization with another bHLH protein. Interacts (via N-terminus) with NEUROD1 (via N-terminus and C-terminus). Interacts with ID2. Interacts with NR1I3 and EID1. Interacts with RARA, RXRA, THRB, NR5A1, NR5A2, PPARA and PPARG. Interacts with RORG, NFIL3, NR1D1 and BHLHE41. Interacts with HNF4A; the resulting heterodimer is transcriptionally inactive. Interacts with DDX3X; this interaction disrupts the interaction between HNF4 and NR0B2/SHP that forms inactive heterodimers and enhances the formation of active HNF4 homodimers. In terms of processing, arginine methylation by PRMT5 enhances repression activity of metabolic genes in liver in response to bile acid signaling, by increasing interaction with cofactors. As to expression, detected in kidney, testis, heart and liver.

The protein localises to the cytoplasm. It localises to the nucleus. Transcriptional regulator that acts as a negative regulator of receptor-dependent signaling pathways. Specifically inhibits transactivation of the nuclear receptor with which it interacts. Inhibits transcriptional activity of NEUROD1 on E-box-containing promoter by interfering with the coactivation function of the p300/CBP-mediated transcription complex for NEUROD1. Essential component of the liver circadian clock which via its interaction with NR1D1 and RORG regulates NPAS2-mediated hepatic lipid metabolism. Regulates the circadian expression of cytochrome P450 (CYP) enzymes. Represses: NR5A2 and HNF4A to down-regulate CYP2C38, NFLI3 to up-regulate CYP2A5, BHLHE41/HNF1A axis to up-regulate CYP1A2, CYP2E1 and CYP3A11, and NR1D1 to up-regulate CYP2B10, CYP4A10 and CYP4A14. In Rattus norvegicus (Rat), this protein is Nuclear receptor subfamily 0 group B member 2 (Nr0b2).